The primary structure comprises 88 residues: Apolipoprotein C-I (88 aa).

Positions 1–26 (MRLLLSLPVLLVALSVVLERPAPAQA) are cleaved as a signal peptide.

This sequence belongs to the apolipoprotein C1 family.

It is found in the secreted. Its function is as follows. Inhibitor of lipoprotein binding to the low density lipoprotein (LDL) receptor, LDL receptor-related protein, and very low density lipoprotein (VLDL) receptor. Associates with high density lipoproteins (HDL) and the triacylglycerol-rich lipoproteins in the plasma and makes up about 10% of the protein of the VLDL and 2% of that of HDL. Appears to interfere directly with fatty acid uptake and is also the major plasma inhibitor of cholesteryl ester transfer protein (CETP). Binds free fatty acids and reduces their intracellular esterification. Modulates the interaction of APOE with beta-migrating VLDL and inhibits binding of beta-VLDL to the LDL receptor-related protein. This chain is Apolipoprotein C-I (APOC1), found in Tupaia glis (Common tree shrew).